The chain runs to 369 residues: Mitogen-activated protein kinase 4 (369 aa).

In terms of domain architecture, Protein kinase spans 32 to 319 (YVPIKPIGRG…VTEALEHPYM (288 aa)). ATP is bound by residues 38–46 (IGRGAYGIV) and lysine 61. Catalysis depends on aspartate 158, which acts as the Proton acceptor. Threonine 191 is subject to Phosphothreonine. The short motif at 191–193 (TEY) is the TXY element. Tyrosine 193 carries the phosphotyrosine modification.

It belongs to the protein kinase superfamily. CMGC Ser/Thr protein kinase family. MAP kinase subfamily. Post-translationally, dually phosphorylated on Thr-191 and Tyr-193, which activates the enzyme. As to expression, expressed in leaves and panicles.

It carries out the reaction L-seryl-[protein] + ATP = O-phospho-L-seryl-[protein] + ADP + H(+). The catalysed reaction is L-threonyl-[protein] + ATP = O-phospho-L-threonyl-[protein] + ADP + H(+). Activated by threonine and tyrosine phosphorylation. The chain is Mitogen-activated protein kinase 4 (MPK4) from Oryza sativa subsp. japonica (Rice).